The sequence spans 430 residues: Protein translocase subunit SecY (430 aa).

Helical transmembrane passes span 18 to 38 (VIFT…PVPG), 67 to 87 (FSIF…MQLL), 118 to 138 (IVLG…FFPG), 145 to 165 (VSVY…LMWL), 177 to 197 (GISI…LNLI), 213 to 233 (IVVI…VIFV), 270 to 290 (VIPV…AGLF), 309 to 329 (PIGM…YTFI), 369 to 389 (FVGS…IKFA), and 390 to 410 (DLPQ…GVAL).

It belongs to the SecY/SEC61-alpha family. Component of the Sec protein translocase complex. Heterotrimer consisting of SecY, SecE and SecG subunits. The heterotrimers can form oligomers, although 1 heterotrimer is thought to be able to translocate proteins. Interacts with the ribosome. Interacts with SecDF, and other proteins may be involved. Interacts with SecA.

The protein resides in the cell membrane. In terms of biological role, the central subunit of the protein translocation channel SecYEG. Consists of two halves formed by TMs 1-5 and 6-10. These two domains form a lateral gate at the front which open onto the bilayer between TMs 2 and 7, and are clamped together by SecE at the back. The channel is closed by both a pore ring composed of hydrophobic SecY resides and a short helix (helix 2A) on the extracellular side of the membrane which forms a plug. The plug probably moves laterally to allow the channel to open. The ring and the pore may move independently. The polypeptide is Protein translocase subunit SecY (Halalkalibacterium halodurans (strain ATCC BAA-125 / DSM 18197 / FERM 7344 / JCM 9153 / C-125) (Bacillus halodurans)).